Reading from the N-terminus, the 369-residue chain is Aminomethyltransferase (369 aa).

This sequence belongs to the GcvT family. As to quaternary structure, the glycine cleavage system is composed of four proteins: P, T, L and H.

The enzyme catalyses N(6)-[(R)-S(8)-aminomethyldihydrolipoyl]-L-lysyl-[protein] + (6S)-5,6,7,8-tetrahydrofolate = N(6)-[(R)-dihydrolipoyl]-L-lysyl-[protein] + (6R)-5,10-methylene-5,6,7,8-tetrahydrofolate + NH4(+). Functionally, the glycine cleavage system catalyzes the degradation of glycine. The sequence is that of Aminomethyltransferase from Xanthomonas euvesicatoria pv. vesicatoria (strain 85-10) (Xanthomonas campestris pv. vesicatoria).